Reading from the N-terminus, the 60-residue chain is Cytotoxin SP15c (60 aa).

4 disulfides stabilise this stretch: Cys-3–Cys-21, Cys-14–Cys-38, Cys-42–Cys-53, and Cys-54–Cys-59.

The protein belongs to the three-finger toxin family. Short-chain subfamily. Type IA cytotoxin sub-subfamily. As to quaternary structure, monomer in solution; Homodimer and oligomer in the presence of negatively charged lipids forming a pore with a size ranging between 20 and 30 Angstroms. As to expression, expressed by the venom gland.

It localises to the secreted. It is found in the target cell membrane. Functionally, shows cytolytic activity on many different cells by forming pore in lipid membranes. In vivo, increases heart rate or kills the animal by cardiac arrest. In addition, it binds to heparin with high affinity, interacts with Kv channel-interacting protein 1 (KCNIP1) in a calcium-independent manner, and binds to integrin alpha-V/beta-3 (ITGAV/ITGB3) with moderate affinity. The polypeptide is Cytotoxin SP15c (Naja atra (Chinese cobra)).